A 356-amino-acid polypeptide reads, in one-letter code: tRNA-specific 2-thiouridylase MnmA (356 aa).

6-13 (AVSGGTDS) contacts ATP. The active-site Nucleophile is Cys-95. Cys-95 and Cys-195 are joined by a disulfide. Gly-119 contributes to the ATP binding site. The tract at residues 145–147 (KDQ) is interaction with tRNA. The active-site Cysteine persulfide intermediate is the Cys-195. The tract at residues 300 to 301 (RY) is interaction with tRNA.

The protein belongs to the MnmA/TRMU family.

It is found in the cytoplasm. It carries out the reaction S-sulfanyl-L-cysteinyl-[protein] + uridine(34) in tRNA + AH2 + ATP = 2-thiouridine(34) in tRNA + L-cysteinyl-[protein] + A + AMP + diphosphate + H(+). Catalyzes the 2-thiolation of uridine at the wobble position (U34) of tRNA, leading to the formation of s(2)U34. The sequence is that of tRNA-specific 2-thiouridylase MnmA from Oleidesulfovibrio alaskensis (strain ATCC BAA-1058 / DSM 17464 / G20) (Desulfovibrio alaskensis).